The sequence spans 513 residues: ATP synthase subunit alpha (513 aa).

169-176 is a binding site for ATP; the sequence is GDRQTGKT.

This sequence belongs to the ATPase alpha/beta chains family. F-type ATPases have 2 components, CF(1) - the catalytic core - and CF(0) - the membrane proton channel. CF(1) has five subunits: alpha(3), beta(3), gamma(1), delta(1), epsilon(1). CF(0) has three main subunits: a(1), b(2) and c(9-12). The alpha and beta chains form an alternating ring which encloses part of the gamma chain. CF(1) is attached to CF(0) by a central stalk formed by the gamma and epsilon chains, while a peripheral stalk is formed by the delta and b chains.

Its subcellular location is the cell inner membrane. The catalysed reaction is ATP + H2O + 4 H(+)(in) = ADP + phosphate + 5 H(+)(out). Functionally, produces ATP from ADP in the presence of a proton gradient across the membrane. The alpha chain is a regulatory subunit. The protein is ATP synthase subunit alpha of Shewanella loihica (strain ATCC BAA-1088 / PV-4).